Here is a 941-residue protein sequence, read N- to C-terminus: MDKIEVRGARTHNLKNINLVIPRDKLIVVTGLSGSGKSSLAFDTLYAEGQRRYVESLSAYARQFLSLMEKPDVDHIEGLSPAISIEQKSTSHNPRSTVGTITEIHDYLRLLFARVGEPRCPDHDVPLAAQTVSQMVDNVLSQPEGKRLMLLAPIIKERKGEHTKTLENLASQGYIRARIDGEVCDLSDPPKLELQKKHTIEVVIDRFKVRNDLSQRLAESFETALELSGGTAVVADMDDEKAEELLFSANFACPICGYSMRELEPRLFSFNNPAGACPTCDGLGVQQYFDPDRVIQNPDLSLAGGAIRGWDRRNFYYFQMLKSLAEHYKFDVDAPWASLSANVHKVVLYGSGKENIEFKYMNDRGDTSVRRHPFEGVLHNMERRYKETESSAVREELAKFISNRPCASCEGTRLNREARHVFVENTPLPAISDMSIGHAMDFFTNLKLSGQRAKIAEKVLKEIGDRLKFLVNVGLNYLTLSRSAETLSGGEAQRIRLASQIGAGLVGVMYVLDEPSIGLHQRDNERLLGTLIHLRNLGNTVIVVEHDEDAIRAADHVIDIGPGAGVHGGEVVAEGPLEAIMAVPESLTGQYMSGKRKIEVPKQRVPANPEKVLKLTGARGNNLKDVTLTLPVGLFTCITGVSGSGKSTLINDTLFPIAQRQLNGATIAEPAPYRDIQGLEHFDKVIDIDQSPIGRTPRSNPATYTGVFTPVRELFAGVPESRSRGYTPGRFSFNVRGGRCEACQGDGVIKVEMHFLPDIYVPCDQCKGKRYNRETLEIKYKGKTIHEVLDMTIEEAREFFDAVPALARKLQTLMDVGLTYIRLGQSATTLSGGEAQRVKLARELSKRGTGQTLYILDEPTTGLHFADIQQLLDVLHQLRDQGNTIVVIEHNLDVIKTADWIVDLGPEGGSGGGEILVAGTPETVAECEASHTARFLKPMLK.

31 to 38 (GLSGSGKS) provides a ligand contact to ATP. Residues 253–280 (CPICGYSMRELEPRLFSFNNPAGACPTC) form a C4-type zinc finger. ABC transporter domains are found at residues 310–587 (WDRR…PESL) and 607–937 (ANPE…RFLK). 640-647 (GVSGSGKS) serves as a coordination point for ATP. The C4-type zinc finger occupies 740–766 (CEACQGDGVIKVEMHFLPDIYVPCDQC).

Belongs to the ABC transporter superfamily. UvrA family. As to quaternary structure, forms a heterotetramer with UvrB during the search for lesions.

It is found in the cytoplasm. Its function is as follows. The UvrABC repair system catalyzes the recognition and processing of DNA lesions. UvrA is an ATPase and a DNA-binding protein. A damage recognition complex composed of 2 UvrA and 2 UvrB subunits scans DNA for abnormalities. When the presence of a lesion has been verified by UvrB, the UvrA molecules dissociate. The chain is UvrABC system protein A from Salmonella typhi.